We begin with the raw amino-acid sequence, 473 residues long: Arginine biosynthesis bifunctional protein ArgJ, mitochondrial (473 aa).

Threonine 201, lysine 230, threonine 241, glutamate 328, asparagine 468, and threonine 473 together coordinate substrate. Catalysis depends on threonine 241, which acts as the Nucleophile.

Belongs to the ArgJ family. In terms of assembly, heterodimer of an alpha and a beta chain. The alpha and beta chains are autoproteolytically processed from a single precursor protein within the mitochondrion.

It is found in the mitochondrion matrix. It catalyses the reaction N(2)-acetyl-L-ornithine + L-glutamate = N-acetyl-L-glutamate + L-ornithine. The catalysed reaction is L-glutamate + acetyl-CoA = N-acetyl-L-glutamate + CoA + H(+). It participates in amino-acid biosynthesis; L-arginine biosynthesis; L-ornithine and N-acetyl-L-glutamate from L-glutamate and N(2)-acetyl-L-ornithine (cyclic): step 1/1. Its pathway is amino-acid biosynthesis; L-arginine biosynthesis; N(2)-acetyl-L-ornithine from L-glutamate: step 1/4. Functionally, catalyzes two activities which are involved in the cyclic version of arginine biosynthesis: the synthesis of acetylglutamate from glutamate and acetyl-CoA, and of ornithine by transacetylation between acetylornithine and glutamate. The chain is Arginine biosynthesis bifunctional protein ArgJ, mitochondrial from Paracoccidioides brasiliensis (strain Pb18).